The sequence spans 213 residues: MNAVLTRRHGLGDNSLQTNFSLSQFISRWVFDLQSSQSIGQSSFNLGLGTSLQFRRQDWVSDSLFDGGNVGFQSLSSFVLLGKSFIGSLELFSLVNHLFNFFRRQSTNSVRDSDVRRLTGRLFDGSNLQDTVSINFEDSFQDWFTSWHHWDVLQVEFTQQSVFFTVNTFTLVDWELNGGLVVSTCSKGSSLDGWNSSVSWNNDTEHVTLHTNT.

This is an uncharacterized protein from Saccharomyces cerevisiae (strain ATCC 204508 / S288c) (Baker's yeast).